A 309-amino-acid polypeptide reads, in one-letter code: Golgi to ER traffic protein 4 homolog (309 aa).

A disordered region spans residues 290–309 (SGGGLASMEVDGPTIEDEMD).

Belongs to the GET4 family.

Functionally, may play a role in insertion of tail-anchored proteins into the endoplasmic reticulum membrane. The protein is Golgi to ER traffic protein 4 homolog of Dictyostelium discoideum (Social amoeba).